The sequence spans 136 residues: MARTKQTACKSTGRKAPRKQLATKAAHKSAPAMGGVKKPHCYRPGTVALHEIHRYQKSTELLICKLPFQRLVREIAQDFKTDLRFQSSAVMALQEASEAYLVGLFEDTNLCAIHAKRVSIMPKDIQLTRRIRGERA.

The span at 1–10 shows a compositional bias: polar residues; sequence MARTKQTACK. Residues 1 to 39 are disordered; that stretch reads MARTKQTACKSTGRKAPRKQLATKAAHKSAPAMGGVKKP. At arginine 3 the chain carries Asymmetric dimethylarginine; by PRMT6. The residue at position 4 (threonine 4) is a Phosphothreonine; by HASPIN. Lysine 5 bears the Allysine; alternate mark. At lysine 5 the chain carries N6,N6,N6-trimethyllysine; alternate. An N6,N6-dimethyllysine; alternate modification is found at lysine 5. Lysine 5 is modified (N6-(2-hydroxyisobutyryl)lysine; alternate). The residue at position 5 (lysine 5) is an N6-acetyllysine; alternate. Residue lysine 5 is modified to N6-methyllysine; alternate. Position 6 is a 5-glutamyl dopamine; alternate (glutamine 6). Glutamine 6 is modified (5-glutamyl serotonin; alternate). Phosphothreonine; by PKC is present on threonine 7. Position 10 is an N6-(2-hydroxyisobutyryl)lysine; alternate (lysine 10). Lysine 10 bears the N6-lactoyllysine; alternate mark. An N6-methylated lysine modification is found at lysine 10. Residue serine 11 is modified to ADP-ribosylserine; alternate. The residue at position 11 (serine 11) is a Phosphoserine; alternate; by AURKB, AURKC, RPS6KA3, RPS6KA4 and RPS6KA5. At threonine 12 the chain carries Phosphothreonine; by PKC. Lysine 15 is subject to N6-(2-hydroxyisobutyryl)lysine; alternate. N6-lactoyllysine; alternate is present on lysine 15. Residue lysine 15 is modified to N6-acetyllysine. Position 15 is an N6-glutaryllysine; alternate (lysine 15). At arginine 18 the chain carries Asymmetric dimethylarginine. Residues lysine 19, lysine 24, and lysine 28 each carry the N6-(2-hydroxyisobutyryl)lysine; alternate modification. Residue lysine 19 is modified to N6-acetyllysine; alternate. Lysine 19, lysine 24, and lysine 28 each carry N6-lactoyllysine; alternate. N6-glutaryllysine; alternate occurs at positions 19, 24, and 28. N6-butyryllysine; alternate is present on residues lysine 19 and lysine 24. Lysine 19 carries the post-translational modification N6-methylated lysine; alternate. Lysine 24 is modified (N6-acetyllysine). Position 28 is an N6-acetyllysine; alternate (lysine 28). Position 28 is an N6-methylated lysine; alternate (lysine 28). Position 29 is an ADP-ribosylserine; alternate (serine 29). A Phosphoserine; alternate; by AURKB, AURKC and RPS6KA5 modification is found at serine 29. The residue at position 37 (lysine 37) is an N6-(2-hydroxyisobutyryl)lysine; alternate. Residue lysine 37 is modified to N6-acetyllysine; alternate. Lysine 37 is subject to N6-methylated lysine; alternate. Tyrosine 42 is subject to Phosphotyrosine. The residue at position 57 (lysine 57) is an N6-(2-hydroxyisobutyryl)lysine; alternate. N6-lactoyllysine; alternate is present on lysine 57. Position 57 is an N6-glutaryllysine; alternate (lysine 57). Residue lysine 57 is modified to N6-succinyllysine; alternate. Serine 58 is subject to Phosphoserine. N6-(2-hydroxyisobutyryl)lysine; alternate occurs at positions 65 and 80. Lysine 65 and lysine 80 each carry N6-methylated lysine. Lysine 80 carries the post-translational modification N6-lactoyllysine; alternate. An N6-glutaryllysine; alternate modification is found at lysine 80. Lysine 80 is subject to N6-succinyllysine; alternate. Residue threonine 81 is modified to Phosphothreonine. N6-acetyllysine; alternate occurs at positions 116 and 123. Residues lysine 116 and lysine 123 each carry the N6-glutaryllysine; alternate modification. Lysine 123 bears the N6-(2-hydroxyisobutyryl)lysine; alternate mark. Residue lysine 123 is modified to N6-methylated lysine; alternate. Lysine 123 carries the N6-succinyllysine; alternate modification.

Belongs to the histone H3 family. The nucleosome is a histone octamer containing two molecules each of H2A, H2B, H3 and H4 assembled in one H3-H4 heterotetramer and two H2A-H2B heterodimers. The octamer wraps approximately 147 bp of DNA. Post-translationally, acetylation is generally linked to gene activation. Acetylation on Lys-19 (H3K18ac) and Lys-24 (H3K24ac) favors methylation at Arg-18 (H3R17me). Acetylation at Lys-123 (H3K122ac) by EP300/p300 plays a central role in chromatin structure: localizes at the surface of the histone octamer and stimulates transcription, possibly by promoting nucleosome instability. In terms of processing, asymmetric dimethylation at Arg-18 (H3R17me2a) is linked to gene activation. Asymmetric dimethylation at Arg-3 (H3R2me2a) by PRMT6 is linked to gene repression and is mutually exclusive with H3 Lys-5 methylation (H3K4me2 and H3K4me3). H3R2me2a is present at the 3' of genes regardless of their transcription state and is enriched on inactive promoters, while it is absent on active promoters. Methylation at Lys-5 (H3K4me) and Lys-80 (H3K79me) are linked to gene activation. Methylation at Lys-5 (H3K4me) facilitates subsequent acetylation of H3 and H4. Methylation at Lys-80 (H3K79me) is associated with DNA double-strand break (DSB) responses and is a specific target for TP53BP1. Methylation at Lys-10 (H3K9me) and Lys-28 (H3K27me) are linked to gene repression. Methylation at Lys-10 (H3K9me) is a specific target for HP1 proteins (CBX1, CBX3 and CBX5) and prevents subsequent phosphorylation at Ser-11 (H3S10ph) and acetylation of H3 and H4. Methylation at Lys-5 (H3K4me) and Lys-80 (H3K79me) require preliminary monoubiquitination of H2B at 'Lys-120'. Post-translationally, phosphorylated at Thr-4 (H3T3ph) by HASPIN during prophase and dephosphorylated during anaphase. Phosphorylation at Ser-11 (H3S10ph) by AURKB is crucial for chromosome condensation and cell-cycle progression during mitosis and meiosis. In addition phosphorylation at Ser-11 (H3S10ph) by RPS6KA4 and RPS6KA5 is important during interphase because it enables the transcription of genes following external stimulation, like mitogens, stress, growth factors or UV irradiation and result in the activation of genes, such as c-fos and c-jun. Phosphorylation at Ser-11 (H3S10ph), which is linked to gene activation, prevents methylation at Lys-10 (H3K9me) but facilitates acetylation of H3 and H4. Phosphorylation at Ser-11 (H3S10ph) by AURKB mediates the dissociation of HP1 proteins (CBX1, CBX3 and CBX5) from heterochromatin. Phosphorylation at Ser-11 (H3S10ph) is also an essential regulatory mechanism for neoplastic cell transformation. Phosphorylated at Ser-29 (H3S28ph) by MAP3K20 isoform 1, RPS6KA5 or AURKB during mitosis or upon ultraviolet B irradiation. Phosphorylation at Thr-7 (H3T6ph) by PRKCB is a specific tag for epigenetic transcriptional activation that prevents demethylation of Lys-5 (H3K4me) by LSD1/KDM1A. At centromeres, specifically phosphorylated at Thr-12 (H3T11ph) from prophase to early anaphase, by DAPK3 and PKN1. Phosphorylation at Thr-12 (H3T11ph) by PKN1 or isoform M2 of PKM (PKM2) is a specific tag for epigenetic transcriptional activation that promotes demethylation of Lys-10 (H3K9me) by KDM4C/JMJD2C. Phosphorylation at Tyr-42 (H3Y41ph) by JAK2 promotes exclusion of CBX5 (HP1 alpha) from chromatin. In terms of processing, lysine deamination at Lys-5 (H3K4all) to form allysine only takes place on H3K4me3 and results in gene repression. Butyrylation of histones marks active promoters and competes with histone acetylation. It is present during late spermatogenesis. Post-translationally, succinylation at Lys-80 (H3K79succ) by KAT2A takes place with a maximum frequency around the transcription start sites of genes. It gives a specific tag for epigenetic transcription activation. Desuccinylation at Lys-123 (H3K122succ) by SIRT7 in response to DNA damage promotes chromatin condensation and double-strand breaks (DSBs) repair. In terms of processing, serine ADP-ribosylation constitutes the primary form of ADP-ribosylation of proteins in response to DNA damage. Serine ADP-ribosylation at Ser-11 (H3S10ADPr) is mutually exclusive with phosphorylation at Ser-11 (H3S10ph) and impairs acetylation at Lys-10 (H3K9ac).

Its subcellular location is the nucleus. It localises to the chromosome. Functionally, core component of nucleosome. Nucleosomes wrap and compact DNA into chromatin, limiting DNA accessibility to the cellular machineries which require DNA as a template. Histones thereby play a central role in transcription regulation, DNA repair, DNA replication and chromosomal stability. DNA accessibility is regulated via a complex set of post-translational modifications of histones, also called histone code, and nucleosome remodeling. The chain is Histone H3.3C from Cairina moschata (Muscovy duck).